A 194-amino-acid chain; its full sequence is MELEVFAGQEKSELSMIEVARAILEERGRDKEMYFSDLVNAIQVYLEKSDADIREALPFFYSDLNTDGSFIPLGENKWGLRSWYGIDEIDEEIVTLEEDEDGAPKHKRKRVNAFMDGDEDAIDYSDDDPEDESFNTAEEDTEYDEEDPDDEKSEVESYDSEINEIIPDEDLDENVDLDEEDDDYSDDEEDEEGE.

Positions 14–83 (LSMIEVARAI…GENKWGLRSW (70 aa)) constitute an HTH HARE-type domain. The disordered stretch occupies residues 117–194 (GDEDAIDYSD…SDDEEDEEGE (78 aa)).

The protein belongs to the RpoE family. In terms of assembly, RNAP is composed of a core of 2 alpha, a beta and a beta' subunits. The core is associated with a delta subunit and one of several sigma factors.

In terms of biological role, participates in both the initiation and recycling phases of transcription. In the presence of the delta subunit, RNAP displays an increased specificity of transcription, a decreased affinity for nucleic acids, and an increased efficiency of RNA synthesis because of enhanced recycling. The sequence is that of Probable DNA-directed RNA polymerase subunit delta from Streptococcus mutans serotype c (strain ATCC 700610 / UA159).